The primary structure comprises 116 residues: MGEENIELPEGNNKSETEKYIEDLINSIESELPKHVNYTTGIIVDDERNLLIIKNGKLHVGRDENNAKEIKEYVKDANAGYLINALYVLKQMLASYKDLWSGKIEREAKKALNEII.

This is an uncharacterized protein from Saccharolobus islandicus (Sulfolobus islandicus).